The sequence spans 62 residues: Small ribosomal subunit protein uS14 (62 aa).

Residues Cys25, Cys28, Cys41, and Cys44 each contribute to the Zn(2+) site.

It belongs to the universal ribosomal protein uS14 family. Zinc-binding uS14 subfamily. Part of the 30S ribosomal subunit. Contacts proteins S3 and S10. The cofactor is Zn(2+).

Binds 16S rRNA, required for the assembly of 30S particles and may also be responsible for determining the conformation of the 16S rRNA at the A site. The protein is Small ribosomal subunit protein uS14 of Sulfurihydrogenibium sp. (strain YO3AOP1).